We begin with the raw amino-acid sequence, 63 residues long: Anaphase-promoting complex subunit 13 (63 aa).

The tract at residues 36-63 (KTDDTEETNQETQQADAETWRDLALDTQ) is disordered. Residues 53-63 (ETWRDLALDTQ) show a composition bias toward basic and acidic residues.

The protein belongs to the APC13 family. As to quaternary structure, component of the anaphase promoting complex/cyclosome (APC/C) complex. As to expression, expressed constitutively in roots, leaves, stems, buds, flowers, and seeds.

The protein localises to the nucleus. Its pathway is protein modification; protein ubiquitination. Component of the anaphase promoting complex/cyclosome (APC/C), a cell cycle-regulated E3 ubiquitin ligase that controls progression through mitosis and the G1 phase of the cell cycle. The APC/C complex acts by mediating ubiquitination and subsequent degradation of target proteins. Regulates global growth and development, including phyllotaxis and apical dominance. Required for pollen maturation. Promotes (pri) miRNA transcription of each MIR159 genes. This Arabidopsis thaliana (Mouse-ear cress) protein is Anaphase-promoting complex subunit 13.